A 219-amino-acid chain; its full sequence is Transmembrane protein 17B (219 aa).

The N-linked (GlcNAc...) asparagine glycan is linked to Asn26. A run of 4 helical transmembrane segments spans residues 51–71 (MMLY…IITM), 84–104 (ILLT…LYIG), 116–136 (LAGF…FLLT), and 147–167 (LAVH…SFLV). Asn195 and Asn203 each carry an N-linked (GlcNAc...) asparagine glycan.

Belongs to the TMEM17 family. Part of the tectonic-like complex (also named B9 complex).

The protein localises to the cell projection. Its subcellular location is the cilium membrane. Functionally, transmembrane component of the tectonic-like complex, a complex localized at the transition zone of primary cilia and acting as a barrier that prevents diffusion of transmembrane proteins between the cilia and plasma membranes. Required for ciliogenesis and sonic hedgehog/SHH signaling. The sequence is that of Transmembrane protein 17B (Tmem17-b) from Xenopus tropicalis (Western clawed frog).